A 784-amino-acid chain; its full sequence is Toll-like receptor 2 (784 aa).

The N-terminal stretch at 1–18 (MPHTLWMVWVLGVIISLS) is a signal peptide. The Extracellular segment spans residues 19 to 587 (KEESSNQASL…VRLSVSECHR (569 aa)). Cysteines 30 and 36 form a disulfide. LRR repeat units follow at residues 54-77 (VKSLDLSNNRITYISNSDLQRYVN), 78-101 (LQALVLTSNGINTIEEDSFSSLGR), 102-125 (LEHLDLSYNYLSNLSSSWFKPLSS), 126-150 (LKFLNLLGNPYKTLGETSLFSHLTK), 151-175 (LRILRVGNMDTFTKIQRKDFAGLTF), 176-199 (LEELEIDASDLQSYEPKSLKSIQN), 200-223 (VSHLILHMKQHILLLEIFVDLTSS), 224-250 (VECLELRDTDLDTFHFSELSTGETNSL), 251-278 (IKKFTFRNVKITDESLFQVMKLLSQISG), 279-308 (LLELEFDDCTLNGVGDFRGSDNDRVIDPGK), 309-337 (VETVTIRRLHIPQFYSFNDLSTLYPLTER), 338-361 (VKRITVENSKVFLVPCLLSRHLKS), 362-388 (LEYLDLSENLMVEEYLKNSACEDAWPS), 389-414 (LQTLILRQNHLASLGKTGETLLTLKN), 415-437 (LTNLDISKNTFHYMPETCQWPEK), 438-457 (MKYLNLSSTRIHSVTGCIPK), 458-478 (TLEILDISNNNLNLFSLNLPQ), 479-500 (LKELYISRNKLMTLPDASLLPM), and 501-524 (LLVLKISRNTITTFSKEQLDSFHT). Asn-114 carries N-linked (GlcNAc...) asparagine glycosylation. Asn-199 carries N-linked (GlcNAc...) asparagine glycosylation. Residues Cys-353 and Cys-382 are joined by a disulfide bond. The N-linked (GlcNAc...) asparagine glycan is linked to Asn-414. Cys-432 and Cys-454 are joined by a disulfide. Residue Asn-442 is glycosylated (N-linked (GlcNAc...) asparagine). One can recognise an LRRCT domain in the interval 525-579 (LKTLEAGGNNFICSCEFLSFTQEQQALAKVLVDWPANYLCDSPSHVRGQRVQDVR). Residues 588–608 (AALVSGMCCALFLLILLMGVL) traverse the membrane as a helical segment. Residues 609–784 (CHRFHGLWYM…WVNLRAAIKS (176 aa)) lie on the Cytoplasmic side of the membrane. One can recognise a TIR domain in the interval 639-782 (ICYDAFVSYS…GFWVNLRAAI (144 aa)). Residue Lys-754 forms a Glycyl lysine isopeptide (Lys-Gly) (interchain with G-Cter in ubiquitin) linkage. Residues 761–778 (YLEWPMDEARQEGFWVNL) carry the ATG16L1-binding motif motif.

It belongs to the Toll-like receptor family. In terms of assembly, interacts with LY96, TLR1 and TLR6 (via extracellular domain). TLR2 seems to exist in heterodimers with either TLR1 or TLR6 before stimulation by the ligand. The heterodimers form bigger oligomers in response to their corresponding ligands as well as further heterotypic associations with other receptors such as CD14 and/or CD36. Binds MYD88 (via TIR domain). Interacts with TICAM1. Interacts with CNPY3. Interacts with ATG16L1. Interacts with PPP1R11. Interacts with TICAM2. Interacts with TIRAP. Ubiquitinated at Lys-754 by PPP1R11, leading to its degradation. Deubiquitinated by USP2. In terms of processing, glycosylation of Asn-442 is critical for secretion of the N-terminal ectodomain of TLR2.

It is found in the membrane. Its subcellular location is the cytoplasmic vesicle. It localises to the phagosome membrane. The protein localises to the membrane raft. Its function is as follows. Cooperates with LY96 to mediate the innate immune response to bacterial lipoproteins and other microbial cell wall components. Cooperates with TLR1 or TLR6 to mediate the innate immune response to bacterial lipoproteins or lipopeptides. Acts via MYD88 and TRAF6, leading to NF-kappa-B activation, cytokine secretion and the inflammatory response. May also promote apoptosis in response to lipoproteins. Forms activation clusters composed of several receptors depending on the ligand, these clusters trigger signaling from the cell surface and subsequently are targeted to the Golgi in a lipid-raft dependent pathway. Forms the cluster TLR2:TLR6:CD14:CD36 in response to diacylated lipopeptides and TLR2:TLR1:CD14 in response to triacylated lipopeptides. This Macaca fascicularis (Crab-eating macaque) protein is Toll-like receptor 2 (TLR2).